Consider the following 227-residue polypeptide: MGQLGALLHLVDPTLPIGGFNHSNGLETFVQQGKVNSRASLEEYVQTQLMQNWIYNDGAYLSLAFDAMANHDLDRLLQLDQELAASKIARESREGSYKLGVRLLKIFIRYENHPLLSEFQQAISEKRCQGYFPIVFAMVAQAMNLDKAETLYAFYYNAAVGVVTNGVKLVPLSQMDGQDILFALRTPLAQAVENSLNPDLDWLGAATLASDIRSMQHEQLYTRLYMS.

It belongs to the UreF family. As to quaternary structure, ureD, UreF and UreG form a complex that acts as a GTP-hydrolysis-dependent molecular chaperone, activating the urease apoprotein by helping to assemble the nickel containing metallocenter of UreC. The UreE protein probably delivers the nickel.

The protein localises to the cytoplasm. Required for maturation of urease via the functional incorporation of the urease nickel metallocenter. The polypeptide is Urease accessory protein UreF (Actinobacillus pleuropneumoniae serotype 5b (strain L20)).